The sequence spans 338 residues: Glycerol-3-phosphate dehydrogenase [NAD(P)+] (338 aa).

Residues Ser-13, Trp-14, and Lys-108 each contribute to the NADPH site. Sn-glycerol 3-phosphate contacts are provided by Lys-108, Gly-139, and Ser-141. Residue Ala-143 coordinates NADPH. Sn-glycerol 3-phosphate-binding residues include Lys-194, Asp-247, Ser-257, Arg-258, and Asn-259. Lys-194 acts as the Proton acceptor in catalysis. NADPH is bound at residue Arg-258. 2 residues coordinate NADPH: Val-282 and Glu-284.

Belongs to the NAD-dependent glycerol-3-phosphate dehydrogenase family.

The protein localises to the cytoplasm. The catalysed reaction is sn-glycerol 3-phosphate + NAD(+) = dihydroxyacetone phosphate + NADH + H(+). It catalyses the reaction sn-glycerol 3-phosphate + NADP(+) = dihydroxyacetone phosphate + NADPH + H(+). It participates in membrane lipid metabolism; glycerophospholipid metabolism. In terms of biological role, catalyzes the reduction of the glycolytic intermediate dihydroxyacetone phosphate (DHAP) to sn-glycerol 3-phosphate (G3P), the key precursor for phospholipid synthesis. The chain is Glycerol-3-phosphate dehydrogenase [NAD(P)+] from Streptococcus gordonii (strain Challis / ATCC 35105 / BCRC 15272 / CH1 / DL1 / V288).